A 582-amino-acid chain; its full sequence is Spermatogenesis-associated protein 7 homolog (582 aa).

Disordered stretches follow at residues 167–192 and 251–289; these read LMSG…CDRR and RKDF…EVNI. Polar residues-rich tracts occupy residues 169-181 and 262-274; these read SGTQ…SPSR and ETQT…NSEL.

As to quaternary structure, found in a complex with CFAP410, NEK1 and SPATA7. Interacts with NEK1. Interacts with RPGRIP1. Interacts with RPGR. Interacts with NPHP4. Interacts with NPHP1. Interacts with AHI1. In terms of tissue distribution, expressed in the retina (at protein level). Expressed in the choroid region and retinal pigment endothelium, within the photoreceptor layer (at protein level).

The protein localises to the cytoplasm. It localises to the cytoskeleton. It is found in the cilium axoneme. Its subcellular location is the cilium basal body. The protein resides in the cell projection. The protein localises to the cilium. It localises to the photoreceptor outer segment. Functionally, involved in the maintenance of both rod and cone photoreceptor cells. Required for photoreceptor-specific localization of proximal connecting cilium (CC) proteins RPGR, AHI1, NPHP1, NPHP4, and RPGRIP1 at the distal CC, a photoreceptor-specific extension of the primary cilium transition zone. Maintenance of protein localization at the photoreceptor-specific distal CC is essential for normal microtubule stability and to prevent photoreceptor degeneration. The protein is Spermatogenesis-associated protein 7 homolog (Spata7) of Mus musculus (Mouse).